Reading from the N-terminus, the 422-residue chain is UDP-N-acetylglucosamine 1-carboxyvinyltransferase (422 aa).

Residue 22–23 (KN) coordinates phosphoenolpyruvate. Arginine 94 serves as a coordination point for UDP-N-acetyl-alpha-D-glucosamine. The active-site Proton donor is the cysteine 118. A 2-(S-cysteinyl)pyruvic acid O-phosphothioketal modification is found at cysteine 118. UDP-N-acetyl-alpha-D-glucosamine is bound by residues 123 to 127 (RPIDL), aspartate 309, and leucine 331.

It belongs to the EPSP synthase family. MurA subfamily.

The protein localises to the cytoplasm. It carries out the reaction phosphoenolpyruvate + UDP-N-acetyl-alpha-D-glucosamine = UDP-N-acetyl-3-O-(1-carboxyvinyl)-alpha-D-glucosamine + phosphate. Its pathway is cell wall biogenesis; peptidoglycan biosynthesis. Its function is as follows. Cell wall formation. Adds enolpyruvyl to UDP-N-acetylglucosamine. The sequence is that of UDP-N-acetylglucosamine 1-carboxyvinyltransferase from Sulfurimonas denitrificans (strain ATCC 33889 / DSM 1251) (Thiomicrospira denitrificans (strain ATCC 33889 / DSM 1251)).